A 31-amino-acid chain; its full sequence is Cytochrome b6-f complex subunit 6 (31 aa).

Residues 4 to 24 (ITSYFGFLLAALTITSVLFIG) form a helical membrane-spanning segment.

This sequence belongs to the PetL family. As to quaternary structure, the 4 large subunits of the cytochrome b6-f complex are cytochrome b6, subunit IV (17 kDa polypeptide, PetD), cytochrome f and the Rieske protein, while the 4 small subunits are PetG, PetL, PetM and PetN. The complex functions as a dimer.

It localises to the plastid. The protein localises to the chloroplast thylakoid membrane. Functionally, component of the cytochrome b6-f complex, which mediates electron transfer between photosystem II (PSII) and photosystem I (PSI), cyclic electron flow around PSI, and state transitions. PetL is important for photoautotrophic growth as well as for electron transfer efficiency and stability of the cytochrome b6-f complex. In Nandina domestica (Heavenly bamboo), this protein is Cytochrome b6-f complex subunit 6.